Reading from the N-terminus, the 155-residue chain is Photosystem I reaction center subunit XI (155 aa).

A run of 2 helical transmembrane segments spans residues 80-102 and 117-139; these read LISG…LVSF and GWSQ…AFFL.

The protein belongs to the PsaL family.

Its subcellular location is the cellular thylakoid membrane. This is Photosystem I reaction center subunit XI from Thermosynechococcus vestitus (strain NIES-2133 / IAM M-273 / BP-1).